A 143-amino-acid chain; its full sequence is Nucleoside diphosphate kinase (143 aa).

6 residues coordinate ATP: Lys-10, Phe-58, Arg-86, Thr-92, Arg-103, and Asn-113. His-116 serves as the catalytic Pros-phosphohistidine intermediate.

Belongs to the NDK family. As to quaternary structure, homotetramer. The cofactor is Mg(2+).

The protein localises to the cytoplasm. It carries out the reaction a 2'-deoxyribonucleoside 5'-diphosphate + ATP = a 2'-deoxyribonucleoside 5'-triphosphate + ADP. The catalysed reaction is a ribonucleoside 5'-diphosphate + ATP = a ribonucleoside 5'-triphosphate + ADP. Its function is as follows. Major role in the synthesis of nucleoside triphosphates other than ATP. The ATP gamma phosphate is transferred to the NDP beta phosphate via a ping-pong mechanism, using a phosphorylated active-site intermediate. In Ehrlichia ruminantium (strain Welgevonden), this protein is Nucleoside diphosphate kinase.